Reading from the N-terminus, the 481-residue chain is Tryptophan--tRNA ligase, cytoplasmic (481 aa).

Residues 12–68 (SPLELFNSIAAQGELVRSLKAGNAPKDEIESAVKMLLSLKMNYKTAMGEEYKAGCPP) form the WHEP-TRS domain. Residues 65–85 (GCPPGNSTAGSNGDPDATKAS) form a disordered region. Lys-158 bears the N6-succinyllysine mark. Positions 168-177 (PSSEAMHLGH) match the 'HIGH' region motif. The 'KMSKS' region motif lies at 353-357 (KMSAS). Phosphoserine is present on Ser-355.

Belongs to the class-I aminoacyl-tRNA synthetase family. As to quaternary structure, homodimer. Interacts with oxidized form of GAPDH. In terms of processing, proteolytic cleavage generates 2 forms; T1-TrpRS and T2-TrpRS.

The protein resides in the cytoplasm. It catalyses the reaction tRNA(Trp) + L-tryptophan + ATP = L-tryptophyl-tRNA(Trp) + AMP + diphosphate + H(+). Catalyzes the attachment of tryptophan to tRNA(Trp) in a two-step reaction: tryptophan is first activated by ATP to form Trp-AMP and then transferred to the acceptor end of the tRNA(Trp). Could also possess an angiostatic activity. The chain is Tryptophan--tRNA ligase, cytoplasmic from Rattus norvegicus (Rat).